The sequence spans 70 residues: Putative membrane protein insertion efficiency factor (70 aa).

The protein belongs to the UPF0161 family.

It localises to the cell membrane. Functionally, could be involved in insertion of integral membrane proteins into the membrane. This Finegoldia magna (strain ATCC 29328 / DSM 20472 / WAL 2508) (Peptostreptococcus magnus) protein is Putative membrane protein insertion efficiency factor.